We begin with the raw amino-acid sequence, 237 residues long: tRNA (guanine-N(1)-)-methyltransferase (237 aa).

S-adenosyl-L-methionine contacts are provided by residues Gly112 and 132 to 137; that span reads IGDFVL.

It belongs to the RNA methyltransferase TrmD family. As to quaternary structure, homodimer.

It is found in the cytoplasm. It catalyses the reaction guanosine(37) in tRNA + S-adenosyl-L-methionine = N(1)-methylguanosine(37) in tRNA + S-adenosyl-L-homocysteine + H(+). Its function is as follows. Specifically methylates guanosine-37 in various tRNAs. This is tRNA (guanine-N(1)-)-methyltransferase from Thermosynechococcus vestitus (strain NIES-2133 / IAM M-273 / BP-1).